The following is a 326-amino-acid chain: Protein phosphatase 1 regulatory subunit SDS22 homolog (326 aa).

Positions 1-22 are disordered; it reads MSNDKSAEVVVLPRENDEESKE. 12 LRR repeats span residues 35-57, 58-80, 81-102, 103-126, 128-146, 147-170, 172-190, 191-212, 213-236, 238-256, 257-280, and 281-304; these read DIDS…LTGF, PKIE…ISSL, VTLT…LESL, VNLV…KLTK, ETLY…LEAL, TQLK…HLVN, DELF…VETL, QKLS…VEQL, NNLK…PLTN, LLLD…VERL, ESLN…QLSK, and LKGL…QYRR.

It belongs to the SDS22 family.

It is found in the nucleus. Its function is as follows. Regulatory subunit of protein phosphatase 1. This chain is Protein phosphatase 1 regulatory subunit SDS22 homolog (sds-22), found in Caenorhabditis elegans.